The primary structure comprises 473 residues: MTESAMTSRAGRGRGADLVAAVVQGHAAASDAAGDLSFPDGFIWGAATAAYQIEGAWREDGRGLWDVFSHTPGKVASGHTGDIACDHYHRYADDVRLMAGLGDRVYRFSVAWPRIVPDGSGPVNPAGLDFYDRLVDELLGHGITPYPTLYHWDLPQTLEDRGGWAARDTAYRFAEYALAVHRRLGDRVRCWITLNEPWVAAFLATHRGAPGAADVPRFRAVHHLLLGHGLGLRLRSAGAGQLGLTLSLSPVIEARPGVRGGGRRVDALANRQFLDPALRGRYPEEVLKIMAGHARLGHPGRDLETIHQPVDLLGVNYYSHVRLAAEGEPANRLPGSEGIRFERPTAVTAWPGDRPDGLRTLLLRLSRDYPGVGLIITENGAAFDDRADGDRVHDPERIRYLTATLRAVHDAIMAGADLRGYFVWSVLDNFEWAYGYHKRGIVYVDYTTMRRIPRESALWYRDVVRRNGLRNGE.

The Proton donor role is filled by E196. E378 serves as the catalytic Nucleophile.

The protein belongs to the glycosyl hydrolase 1 family.

The protein resides in the cytoplasm. It carries out the reaction Hydrolysis of terminal, non-reducing beta-D-glucosyl residues with release of beta-D-glucose.. The protein is Thermostable beta-glucosidase B (bglB) of Thermobispora bispora (Microbispora bispora).